A 126-amino-acid polypeptide reads, in one-letter code: Profilin (126 aa).

Belongs to the profilin family. In terms of assembly, occurs in many kinds of cells as a complex with monomeric actin in a 1:1 ratio. As to expression, expressed in ovary and head.

It is found in the cytoplasm. The protein resides in the cytoskeleton. In terms of biological role, binds to actin and affects the structure of the cytoskeleton. At high concentrations, profilin prevents the polymerization of actin, whereas it enhances it at low concentrations. By binding to PIP2, it may inhibit the formation of IP3 and DG. This profilin is required for intercellular cytoplasm transport during Drosophila oogenesis. Function in neurons is essential for adult survival, and is important for climbing behavior and activity. The protein is Profilin (chic) of Drosophila melanogaster (Fruit fly).